Here is a 216-residue protein sequence, read N- to C-terminus: ATP phosphoribosyltransferase (216 aa).

This sequence belongs to the ATP phosphoribosyltransferase family. Short subfamily. As to quaternary structure, heteromultimer composed of HisG and HisZ subunits.

It is found in the cytoplasm. The enzyme catalyses 1-(5-phospho-beta-D-ribosyl)-ATP + diphosphate = 5-phospho-alpha-D-ribose 1-diphosphate + ATP. It participates in amino-acid biosynthesis; L-histidine biosynthesis; L-histidine from 5-phospho-alpha-D-ribose 1-diphosphate: step 1/9. Catalyzes the condensation of ATP and 5-phosphoribose 1-diphosphate to form N'-(5'-phosphoribosyl)-ATP (PR-ATP). Has a crucial role in the pathway because the rate of histidine biosynthesis seems to be controlled primarily by regulation of HisG enzymatic activity. In Microcystis aeruginosa (strain NIES-843 / IAM M-2473), this protein is ATP phosphoribosyltransferase.